Reading from the N-terminus, the 3065-residue chain is MAX gene-associated protein (3065 aa).

Residues Lys-4 and Lys-178 each participate in a glycyl lysine isopeptide (Lys-Gly) (interchain with G-Cter in SUMO2) cross-link. Positions 84–260 (MWNEFYHRST…YNPFAKGFRD (177 aa)) form a DNA-binding region, T-box. Positions 259 to 277 (RDDGLNNKPQRDGKQKNSS) are enriched in basic and acidic residues. Residues 259–322 (RDDGLNNKPQ…GHETSGKGLE (64 aa)) form a disordered region. Polar residues predominate over residues 278-289 (DQEGNNISSSSG). The segment covering 309-322 (PLSRGHETSGKGLE) has biased composition (basic and acidic residues). Residues Lys-323, Lys-329, Lys-349, Lys-432, Lys-460, Lys-465, and Lys-482 each participate in a glycyl lysine isopeptide (Lys-Gly) (interchain with G-Cter in SUMO2) cross-link. Position 534 is a phosphoserine (Ser-534). Lys-570 is covalently cross-linked (Glycyl lysine isopeptide (Lys-Gly) (interchain with G-Cter in SUMO2)). The disordered stretch occupies residues 604-653 (QNASPNVPGKRGRPRKLKLCKAGRPPKNTGKSLISTKNTPVSPGSTFPDV). The residue at position 607 (Ser-607) is a Phosphoserine. A Glycyl lysine isopeptide (Lys-Gly) (interchain with G-Cter in SUMO2) cross-link involves residue Lys-613. Residues 613–624 (KRGRPRKLKLCK) are compositionally biased toward basic residues. A compositionally biased stretch (polar residues) spans 632-648 (TGKSLISTKNTPVSPGS). A Phosphoserine modification is found at Ser-645. Residues Lys-654, Lys-785, Lys-791, Lys-817, and Lys-826 each participate in a glycyl lysine isopeptide (Lys-Gly) (interchain with G-Cter in SUMO2) cross-link. The residue at position 851 (Ser-851) is a Phosphoserine. The segment at 881–911 (STSYSLKPHSVPPVSRKAKSQNRQATFSGRT) is disordered. Residues 901–911 (QNRQATFSGRT) are compositionally biased toward polar residues. Ser-924 carries the phosphoserine modification. Residue Lys-928 forms a Glycyl lysine isopeptide (Lys-Gly) (interchain with G-Cter in SUMO2) linkage. Residues 971 to 990 (RQAQQQQQQQQGSRPPGLSK) are disordered. The span at 972-981 (QAQQQQQQQQ) shows a compositional bias: low complexity. Residues Lys-990, Lys-1091, Lys-1140, Lys-1162, Lys-1199, and Lys-1207 each participate in a glycyl lysine isopeptide (Lys-Gly) (interchain with G-Cter in SUMO2) cross-link. Positions 1111 to 1147 (YDTLGEEAREEEEGIREEEEQLKEKKKRKKLEYTICE) form a coiled coil. A Phosphoserine modification is found at Ser-1208. Disordered regions lie at residues 1246–1332 (RKKE…PGGP) and 1380–1429 (RKSR…MEDI). Low complexity-rich tracts occupy residues 1253–1269 (QPSSSSSPSPSFQQQTS) and 1310–1322 (KSSCNEGESSSTS). 2 positions are modified to phosphoserine: Ser-1430 and Ser-1457. Residues Lys-1461 and Lys-1502 each participate in a glycyl lysine isopeptide (Lys-Gly) (interchain with G-Cter in SUMO2) cross-link. Disordered stretches follow at residues 1488 to 1517 (SRKPRTLLPSTSNSKMASSSGTATNRPGKN), 1905 to 1927 (SPPEPQSFASKTGSETKITYSSG), and 1967 to 2029 (QMKR…EDRG). 2 stretches are compositionally biased toward polar residues: residues 1495-1514 (LPSTSNSKMASSSGTATNRP) and 1911-1927 (SFASKTGSETKITYSSG). Residues 1968 to 1994 (MKRESQNPDQKDETNSIKREQETKKVL) are compositionally biased toward basic and acidic residues. Glycyl lysine isopeptide (Lys-Gly) (interchain with G-Cter in SUMO2) cross-links involve residues Lys-1985 and Lys-1992. Residues 2008–2023 (IKQNSGAATSEETLND) show a composition bias toward polar residues. Residues Lys-2103, Lys-2113, Lys-2135, Lys-2139, Lys-2146, Lys-2159, Lys-2194, Lys-2206, and Lys-2238 each participate in a glycyl lysine isopeptide (Lys-Gly) (interchain with G-Cter in SUMO2) cross-link. The disordered stretch occupies residues 2258–2316 (RRAAKSSRGNGHFQGHLLLPGEQIQPKQEKKGGRSSADFTVLDLEEDDEDDNEKTDDSI). The residue at position 2265 (Arg-2265) is an Omega-N-methylarginine. Lys-2284 participates in a covalent cross-link: Glycyl lysine isopeptide (Lys-Gly) (interchain with G-Cter in SUMO2). Positions 2300–2316 (DLEEDDEDDNEKTDDSI) are enriched in acidic residues. Glycyl lysine isopeptide (Lys-Gly) (interchain with G-Cter in SUMO2) cross-links involve residues Lys-2378, Lys-2413, Lys-2457, and Lys-2532. The bHLH domain maps to 2423-2474 (YYRRTHTANERRRRGEMRDLFEKLKITLGLLHSSKVSKSLILTRAFSEIQGL). Ser-2541 carries the post-translational modification Phosphoserine. Residue Lys-2546 forms a Glycyl lysine isopeptide (Lys-Gly) (interchain with G-Cter in SUMO2) linkage. Positions 2576 to 2595 (KKDQATENTSPLNTPHTSAN) are disordered. The segment covering 2581–2595 (TENTSPLNTPHTSAN) has biased composition (polar residues). Glycyl lysine isopeptide (Lys-Gly) (interchain with G-Cter in SUMO2) cross-links involve residues Lys-2629, Lys-2679, Lys-2698, and Lys-2784. Residues 2668 to 2709 (GSKYPHEVPDSKPSDHLKDTVRNEDNSLEDKGRISSRGNRDG) are disordered. Residues 2671–2709 (YPHEVPDSKPSDHLKDTVRNEDNSLEDKGRISSRGNRDG) show a composition bias toward basic and acidic residues. The stretch at 2817-2841 (DDTDETLTSLLNEIAFLNQQLNDDS) forms a coiled coil. Residues Ser-2910 and Ser-2921 each carry the phosphoserine modification. Residues 2944-2968 (AIDGGKNTSGLPAEPESVSSPPTLH) are disordered. The residue at position 2978 (Ser-2978) is a Phosphoserine. Lys-3041 is covalently cross-linked (Glycyl lysine isopeptide (Lys-Gly) (interchain with G-Cter in SUMO2)).

Interacts with MAX. Requires dimerization with MAX for E-box binding. Component of some MLL1/MLL complex, at least composed of the core components KMT2A/MLL1, ASH2L, HCFC1/HCF1, WDR5 and RBBP5, as well as the facultative components BACC1, CHD8, E2F6, HSP70, INO80C, KANSL1, LAS1L, MAX, MCRS1, MGA, MYST1/MOF, PELP1, PHF20, PRP31, RING2, RUVB1/TIP49A, RUVB2/TIP49B, SENP3, TAF1, TAF4, TAF6, TAF7, TAF9 and TEX10. Interacts with ZMYND11. As to expression, highly expressed in germ cells and granulosa cells.

The protein localises to the nucleus. In terms of biological role, functions as a dual-specificity transcription factor, regulating the expression of both MAX-network and T-box family target genes. Functions as a repressor or an activator. Binds to 5'-AATTTCACACCTAGGTGTGAAATT-3' core sequence and seems to regulate MYC-MAX target genes. Suppresses transcriptional activation by MYC and inhibits MYC-dependent cell transformation. Function activated by heterodimerization with MAX. This heterodimerization serves the dual function of both generating an E-box-binding heterodimer and simultaneously blocking interaction of a corepressor. The sequence is that of MAX gene-associated protein from Homo sapiens (Human).